Consider the following 511-residue polypeptide: V-type proton ATPase subunit B, brain isoform (511 aa).

R400 contributes to the ATP binding site.

This sequence belongs to the ATPase alpha/beta chains family. As to quaternary structure, V-ATPase is a heteromultimeric enzyme made up of two complexes: the ATP-hydrolytic V1 complex and the proton translocation V0 complex. The V1 complex consists of three catalytic AB heterodimers that form a heterohexamer, three peripheral stalks each consisting of EG heterodimers, one central rotor including subunits D and F, and the regulatory subunits C and H. The proton translocation complex V0 consists of the proton transport subunit a, a ring of proteolipid subunits c9c'', rotary subunit d, subunits e and f, and the accessory subunits ATP6AP1/Ac45 and ATP6AP2/PRR. In terms of tissue distribution, expressed in brain (at protein level). Expressed in all tissues tested, but highest in brain and in adrenal medulla.

The protein localises to the apical cell membrane. The protein resides in the melanosome. Its subcellular location is the cytoplasm. It is found in the cytoplasmic vesicle. It localises to the clathrin-coated vesicle membrane. The protein localises to the secretory vesicle. The protein resides in the synaptic vesicle membrane. Functionally, non-catalytic subunit of the V1 complex of vacuolar(H+)-ATPase (V-ATPase), a multisubunit enzyme composed of a peripheral complex (V1) that hydrolyzes ATP and a membrane integral complex (V0) that translocates protons. V-ATPase is responsible for acidifying and maintaining the pH of intracellular compartments and in some cell types, is targeted to the plasma membrane, where it is responsible for acidifying the extracellular environment. In renal intercalated cells, can partially compensate the lack of ATP6V1B1 and mediate secretion of protons (H+) into the urine under base-line conditions but not in conditions of acid load. This chain is V-type proton ATPase subunit B, brain isoform (ATP6V1B2), found in Bos taurus (Bovine).